The following is a 534-amino-acid chain: Prolyl 4-hydroxylase subunit alpha-1 (534 aa).

Positions 1 to 17 (MIWYILIIGILLPQSLA) are cleaved as a signal peptide. Asn-113 carries N-linked (GlcNAc...) asparagine glycosylation. The TPR repeat unit spans residues 205-238 (VSVLDYLSYAVYQQGDLDKALLLTKKLLELDPEH). Asn-259 carries an N-linked (GlcNAc...) asparagine glycan. The region spanning 411–519 (TAEELQVANY…KWVSNKWLHE (109 aa)) is the Fe2OG dioxygenase domain. The Fe cation site is built by His-429, Asp-431, and His-500. Lys-510 serves as a coordination point for 2-oxoglutarate.

It belongs to the P4HA family. Heterotetramer of two alpha-1 chains and two beta chains (P4HB)(the beta chain is the multi-functional PDI), where P4HB plays the role of a structural subunit; this tetramer catalyzes the formation of 4-hydroxyproline in collagen. It depends on Fe(2+) as a cofactor. The cofactor is L-ascorbate. In terms of tissue distribution, expressed in the heart, liver, skeletal muscle, kidney, placenta, lung and pancreas.

The protein resides in the endoplasmic reticulum lumen. The enzyme catalyses L-prolyl-[collagen] + 2-oxoglutarate + O2 = trans-4-hydroxy-L-prolyl-[collagen] + succinate + CO2. Its activity is regulated as follows. Inhibited by poly(L-proline). In terms of biological role, catalyzes the post-translational formation of 4-hydroxyproline in -Xaa-Pro-Gly- sequences in collagens and other proteins. This chain is Prolyl 4-hydroxylase subunit alpha-1 (P4HA1), found in Homo sapiens (Human).